A 215-amino-acid chain; its full sequence is Glutathione S-transferase D4 (215 aa).

The region spanning 1–80 (MDFYYSPRSS…YLVEKYGKDD (80 aa)) is the GST N-terminal domain. Glutathione contacts are provided by residues serine 9, 50–52 (HTI), and 64–66 (ESR). A GST C-terminal domain is found at 86–207 (DPQKRALINQ…KGLLQMKTMY (122 aa)).

This sequence belongs to the GST superfamily. Delta family. Homodimer.

It carries out the reaction RX + glutathione = an S-substituted glutathione + a halide anion + H(+). Functionally, conjugation of reduced glutathione to a wide number of exogenous and endogenous hydrophobic electrophiles. May be involved in detoxification. The polypeptide is Glutathione S-transferase D4 (Drosophila melanogaster (Fruit fly)).